We begin with the raw amino-acid sequence, 256 residues long: E3 ubiquitin-protein ligase MIR2 (256 aa).

Over 1 to 83 (MASKDVEEGV…NLWPEMERQE (83 aa)) the chain is Cytoplasmic. An RING-CH-type zinc finger spans residues 7 to 66 (EEGVEGPICWICREEVGNEGIHPCACTGELDVVHPQCLSTWLTVSRNTACQMCRVIYRTR). 8 residues coordinate Zn(2+): cysteine 15, cysteine 18, cysteine 30, cysteine 32, histidine 40, cysteine 43, cysteine 56, and cysteine 59. A helical membrane pass occupies residues 84–104 (IFELFLLMSVVVAGLVGVALC). Over 105–124 (TWTLLVILTAPAGTFSPGAV) the chain is Extracellular. A helical transmembrane segment spans residues 125–145 (LGFLCFFGFYQIFIVFAFGGI). Topologically, residues 146–256 (CRVSGTVRAL…VRKNHPKNNG (111 aa)) are cytoplasmic. Positions 179-256 (DNIELTVLVG…VRKNHPKNNG (78 aa)) are disordered. Residues 193 to 203 (TDEEPTDESSE) are compositionally biased toward acidic residues. Basic residues predominate over residues 245–256 (KPVRKNHPKNNG).

In terms of assembly, binds human MHC-I, CD86, ICAM1 and CD1D.

It localises to the host cell membrane. Its subcellular location is the host endoplasmic reticulum. It carries out the reaction S-ubiquitinyl-[E2 ubiquitin-conjugating enzyme]-L-cysteine + [acceptor protein]-L-lysine = [E2 ubiquitin-conjugating enzyme]-L-cysteine + N(6)-ubiquitinyl-[acceptor protein]-L-lysine.. It participates in protein modification; protein ubiquitination. Membrane-bound E3 ubiquitin ligase expressed at the immediate early stage of viral reactivation to mediate polyubiquitination of various host membrane proteins related to the immune response. Promotes ubiquitination and subsequent degradation of host MHC-I, CD86, DC-SIGN and DC-SIGNR, ICAM1 and CD1D molecules, presumably to prevent lysis of infected cells by cytotoxic T-lymphocytes and NK cell. Plays a role in the down-regulation of the host stress-induced NKG2D ligands MICA, MICB and CLEC2B, which enable immune cells expressing the NKG2D receptor to recognize and annihilate infected cells prior to viral spread. Alters monocyte metabolism and proliferation by mediating rapid internalization of cellular growth factor-binding receptor tyrosine kinases from the surface leading to increased signaling. The protein is E3 ubiquitin-protein ligase MIR2 (K5) of Homo sapiens (Human).